The sequence spans 431 residues: Protein EARLY STARVATION 1, chloroplastic (431 aa).

A chloroplast-targeting transit peptide spans 1–19; sequence MAACSRGLVARPFDLTARG. 2 disordered regions span residues 65–126 and 403–431; these read GNKP…DTGI and GVYP…SPLE. Over residues 415 to 431 the composition is skewed to pro residues; the sequence is PAPPSDDPPGMPPSPLE.

It belongs to the ESV1 family.

The protein resides in the plastid. Its subcellular location is the chloroplast stroma. Its function is as follows. Binds preferentially to highly ordered alpha-glucans, such as starch and crystalline maltodextrins. Involved in the organization of the starch granule matrix, thus influencing starch turnover by modulating the accessibility of starch polymers to modifying and degrading enzymes. Required for the control of starch degradation in leaves and starch distribution in nonphotosynthetic parts. Promotes gravitropic responses, negative in shoots but positive in roots, by facilitating starch granules (statoliths) formation in hypocotyls and roots columella. Facilitates tight packing of starch granules in grains. In Oryza sativa subsp. indica (Rice), this protein is Protein EARLY STARVATION 1, chloroplastic.